Here is a 435-residue protein sequence, read N- to C-terminus: GTPase Der (435 aa).

EngA-type G domains follow at residues 4–167 (KIVA…SKND) and 175–350 (TKIA…QSLS). GTP contacts are provided by residues 10-17 (GKPNVGKS), 57-61 (DTGGI), 119-122 (NKYD), 181-188 (GKPNVGKS), 228-232 (DTAGI), and 293-296 (NKWD). Residues 351-435 (VKVKTYVLNE…PINLIFRERK (85 aa)) form the KH-like domain.

The protein belongs to the TRAFAC class TrmE-Era-EngA-EngB-Septin-like GTPase superfamily. EngA (Der) GTPase family. In terms of assembly, associates with the 50S ribosomal subunit.

Its function is as follows. GTPase that plays an essential role in the late steps of ribosome biogenesis. The chain is GTPase Der from Mycoplasma capricolum subsp. capricolum (strain California kid / ATCC 27343 / NCTC 10154).